The chain runs to 609 residues: Indole-3-acetic acid-amido synthetase GH3.17 (609 aa).

It belongs to the IAA-amido conjugating enzyme family.

Its function is as follows. Catalyzes the synthesis of indole-3-acetic acid (IAA)-amino acid conjugates, providing a mechanism for the plant to cope with the presence of excess auxin. Strongly reactive with Glu, Gln, Trp, Asp, Ala, Leu, Phe, Gly, Tyr, Met, Ile and Val. Appears to favor Glu over Asp while the other GH3 favor Asp over Glu. Little or no product formation with His, Ser, Thr, Arg, Lys, or Cys. Also active on pyruvic and butyric acid analogs of IAA, PAA and the synthetic auxin naphthaleneacetic acid (NAA). The two chlorinated synthetic auxin herbicides 2,4-D and 3,6-dichloro-o-anisic acid (dicamba) cannot be used as substrates. This is Indole-3-acetic acid-amido synthetase GH3.17 (GH3.17) from Arabidopsis thaliana (Mouse-ear cress).